The chain runs to 216 residues: FMN-dependent NADH:quinone oxidoreductase (216 aa).

Residues serine 15–serine 17 and serine 139–glycine 142 contribute to the FMN site.

This sequence belongs to the azoreductase type 1 family. As to quaternary structure, homodimer. Requires FMN as cofactor.

It carries out the reaction 2 a quinone + NADH + H(+) = 2 a 1,4-benzosemiquinone + NAD(+). It catalyses the reaction N,N-dimethyl-1,4-phenylenediamine + anthranilate + 2 NAD(+) = 2-(4-dimethylaminophenyl)diazenylbenzoate + 2 NADH + 2 H(+). Quinone reductase that provides resistance to thiol-specific stress caused by electrophilic quinones. In terms of biological role, also exhibits azoreductase activity. Catalyzes the reductive cleavage of the azo bond in aromatic azo compounds to the corresponding amines. In Acidovorax ebreus (strain TPSY) (Diaphorobacter sp. (strain TPSY)), this protein is FMN-dependent NADH:quinone oxidoreductase.